The sequence spans 1261 residues: Structural maintenance of chromosomes protein 3 (1261 aa).

Coiled coils occupy residues E188–Q332 and L406–D450. The region spanning N534–A645 is the SMC hinge domain. Coiled-coil stretches lie at residues K677 to M826, N857 to T930, and R1023 to K1085. Positions L1159 to L1193 match the DA-box motif.

It belongs to the SMC family. SMC3 subfamily. Component of the cohesin complex, composed of the smc-1 and smc-3 heterodimer attached via their SMC hinge domain, scc-1 which links them, and scc-3. Interacts with scc-1, smc-1 and tim-1.

The protein resides in the nucleus. It is found in the chromosome. Involved in chromosome cohesion during cell cycle and in DNA repair. Involved in the repair of double strand breaks during mitosis and meiosis. Required for chromosome segregation during mitosis. Central component of cohesin complex. The cohesin complex is required for the cohesion of sister chromatids after DNA replication. The cohesin complex apparently forms a large proteinaceous ring within which sister chromatids can be trapped. At anaphase, the complex is cleaved and dissociates from chromatin, allowing sister chromatids to segregate. Required for the localization of lab-1 to meiotic and mitotic chromosomes. The protein is Structural maintenance of chromosomes protein 3 of Caenorhabditis elegans.